Reading from the N-terminus, the 261-residue chain is Small ribosomal subunit protein uS2 (261 aa).

Belongs to the universal ribosomal protein uS2 family.

This Thermodesulfovibrio yellowstonii (strain ATCC 51303 / DSM 11347 / YP87) protein is Small ribosomal subunit protein uS2.